A 130-amino-acid polypeptide reads, in one-letter code: ATP synthase epsilon chain (130 aa).

It belongs to the ATPase epsilon chain family. As to quaternary structure, F-type ATPases have 2 components, CF(1) - the catalytic core - and CF(0) - the membrane proton channel. CF(1) has five subunits: alpha(3), beta(3), gamma(1), delta(1), epsilon(1). CF(0) has three main subunits: a, b and c.

The protein localises to the cell inner membrane. In terms of biological role, produces ATP from ADP in the presence of a proton gradient across the membrane. This Campylobacter hominis (strain ATCC BAA-381 / DSM 21671 / CCUG 45161 / LMG 19568 / NCTC 13146 / CH001A) protein is ATP synthase epsilon chain.